Reading from the N-terminus, the 315-residue chain is tRNA-dihydrouridine(16) synthase (315 aa).

FMN is bound by residues 7 to 9 and Gln-68; that span reads PME. Catalysis depends on Cys-98, which acts as the Proton donor. Residues Lys-139, 200 to 202, and 224 to 225 each bind FMN; these read NGE and GR.

This sequence belongs to the Dus family. DusC subfamily. It depends on FMN as a cofactor.

The catalysed reaction is 5,6-dihydrouridine(16) in tRNA + NADP(+) = uridine(16) in tRNA + NADPH + H(+). It carries out the reaction 5,6-dihydrouridine(16) in tRNA + NAD(+) = uridine(16) in tRNA + NADH + H(+). In terms of biological role, catalyzes the synthesis of 5,6-dihydrouridine (D), a modified base found in the D-loop of most tRNAs, via the reduction of the C5-C6 double bond in target uridines. Specifically modifies U16 in tRNAs. This is tRNA-dihydrouridine(16) synthase from Shigella flexneri.